Here is a 388-residue protein sequence, read N- to C-terminus: Succinate--CoA ligase [ADP-forming] subunit beta (388 aa).

One can recognise an ATP-grasp domain in the interval 9 to 244 (KQLFADYGLP…PSQEDPREAH (236 aa)). ATP contacts are provided by residues Lys46, 53–55 (GRG), Glu99, Thr102, and Glu107. Asn199 and Asp213 together coordinate Mg(2+). Substrate-binding positions include Asn264 and 321–323 (GIV).

The protein belongs to the succinate/malate CoA ligase beta subunit family. Heterotetramer of two alpha and two beta subunits. It depends on Mg(2+) as a cofactor.

It catalyses the reaction succinate + ATP + CoA = succinyl-CoA + ADP + phosphate. The enzyme catalyses GTP + succinate + CoA = succinyl-CoA + GDP + phosphate. The protein operates within carbohydrate metabolism; tricarboxylic acid cycle; succinate from succinyl-CoA (ligase route): step 1/1. In terms of biological role, succinyl-CoA synthetase functions in the citric acid cycle (TCA), coupling the hydrolysis of succinyl-CoA to the synthesis of either ATP or GTP and thus represents the only step of substrate-level phosphorylation in the TCA. The beta subunit provides nucleotide specificity of the enzyme and binds the substrate succinate, while the binding sites for coenzyme A and phosphate are found in the alpha subunit. The chain is Succinate--CoA ligase [ADP-forming] subunit beta from Hahella chejuensis (strain KCTC 2396).